The chain runs to 422 residues: L-threonine dehydratase biosynthetic IlvA (422 aa).

Lys56 is modified (N6-(pyridoxal phosphate)lysine). Pyridoxal 5'-phosphate contacts are provided by residues Asn83, 189–193, and Ser315; that span reads GGGGL. Residues 339–413 form the ACT-like domain; it reads HYFILNFPQR…FDPSNIYINE (75 aa).

The protein belongs to the serine/threonine dehydratase family. As to quaternary structure, homotetramer. It depends on pyridoxal 5'-phosphate as a cofactor.

The catalysed reaction is L-threonine = 2-oxobutanoate + NH4(+). It participates in amino-acid biosynthesis; L-isoleucine biosynthesis; 2-oxobutanoate from L-threonine: step 1/1. Catalyzes the anaerobic formation of alpha-ketobutyrate and ammonia from threonine in a two-step reaction. The first step involved a dehydration of threonine and a production of enamine intermediates (aminocrotonate), which tautomerizes to its imine form (iminobutyrate). Both intermediates are unstable and short-lived. The second step is the nonenzymatic hydrolysis of the enamine/imine intermediates to form 2-ketobutyrate and free ammonia. In the low water environment of the cell, the second step is accelerated by RidA. The sequence is that of L-threonine dehydratase biosynthetic IlvA (ilvA) from Staphylococcus epidermidis (strain ATCC 12228 / FDA PCI 1200).